A 77-amino-acid chain; its full sequence is U11-lycotoxin-Ls1a (77 aa).

Positions 1–20 (MKLIILTGLVLFAIVSLIEA) are cleaved as a signal peptide. Positions 21 to 26 (EEESGR) are excised as a propeptide.

It belongs to the neurotoxin 19 (CSTX) family. 10 (U11-Lctx) subfamily. Contains 4 disulfide bonds. Expressed by the venom gland.

Its subcellular location is the secreted. This Lycosa singoriensis (Wolf spider) protein is U11-lycotoxin-Ls1a.